Here is a 434-residue protein sequence, read N- to C-terminus: Transcription elongation factor B polypeptide 3 (434 aa).

Residues 142–161 (KPEPVDVHEQQASSSSMSYQ) are disordered. A compositionally biased stretch (polar residues) spans 151–160 (QQASSSSMSY). The BC box stretch occupies residues 221-230 (TLVSLCQTVL). Residues 237–281 (IDHVGIVPFDLLKPVLDHASTDQLRHILDVNPMLVEDADEMFHEM) enclose the F-box domain. The segment at 391 to 415 (ITPRGGGVPSTSRSRSNNNNNMNNG) is disordered.

As to quaternary structure, heterotrimer of an A, B and C subunit.

It localises to the nucleus. Its function is as follows. SIII, also known as elongin, is a general transcription elongation factor that increases the RNA polymerase II transcription elongation past template-encoded arresting sites. Subunit A is transcriptionally active and its transcription activity is strongly enhanced by binding to the dimeric complex of the SIII regulatory subunits B and C (elongin BC complex). This is Transcription elongation factor B polypeptide 3 from Caenorhabditis elegans.